Here is a 385-residue protein sequence, read N- to C-terminus: Mannitol-1-phosphate 5-dehydrogenase (385 aa).

Position 3–14 (3–14) interacts with NAD(+); the sequence is ALQFGAGNIGRG.

It belongs to the mannitol dehydrogenase family.

The catalysed reaction is D-mannitol 1-phosphate + NAD(+) = beta-D-fructose 6-phosphate + NADH + H(+). This Buchnera aphidicola subsp. Acyrthosiphon pisum (strain APS) (Acyrthosiphon pisum symbiotic bacterium) protein is Mannitol-1-phosphate 5-dehydrogenase (mtlD).